A 141-amino-acid polypeptide reads, in one-letter code: Hemoglobin subunit alpha (141 aa).

Residues 1-141 (VLSPADKTNV…VSTVLTSKYR (141 aa)) form the Globin domain. Phosphoserine is present on Ser3. Lys7 is modified (N6-succinyllysine). Thr8 is modified (phosphothreonine). Lys11 is subject to N6-succinyllysine. Residue Lys16 is modified to N6-acetyllysine; alternate. Lys16 is subject to N6-succinyllysine; alternate. Phosphotyrosine is present on Tyr24. Ser35 bears the Phosphoserine mark. Lys40 is modified (N6-succinyllysine). At Ser49 the chain carries Phosphoserine. His58 serves as a coordination point for O2. His87 contributes to the heme b binding site. Ser102 carries the post-translational modification Phosphoserine. Thr108 is modified (phosphothreonine). Ser124 is subject to Phosphoserine. 2 positions are modified to phosphothreonine: Thr134 and Thr137. Position 138 is a phosphoserine (Ser138).

This sequence belongs to the globin family. In terms of assembly, heterotetramer of two alpha chains and two beta chains. In terms of tissue distribution, red blood cells.

Its function is as follows. Involved in oxygen transport from the lung to the various peripheral tissues. This is Hemoglobin subunit alpha from Tamias merriami (Merriam's chipmunk).